A 342-amino-acid chain; its full sequence is N-alpha-acetyl-L-2,4-diaminobutyric acid deacetylase (342 aa).

The disordered stretch occupies residues Thr-103–Pro-124.

The protein belongs to the DoeB deacetylase family. Zn(2+) serves as cofactor.

It localises to the cytoplasm. It catalyses the reaction (2S)-2-acetamido-4-aminobutanoate + H2O = L-2,4-diaminobutanoate + acetate. Involved in the degradation of ectoine, which allows H.elongata to utilize ectoine as both a carbon and a nitrogen source for growth. Catalyzes the deacetylation of N-alpha-acetyl-L-2,4-diaminobutyrate (N-alpha-Ac-DABA) to yield L-2,4-diaminobutyrate (DABA). This Halomonas elongata (strain ATCC 33173 / DSM 2581 / NBRC 15536 / NCIMB 2198 / 1H9) protein is N-alpha-acetyl-L-2,4-diaminobutyric acid deacetylase.